A 230-amino-acid chain; its full sequence is Ureidoacrylate amidohydrolase RutB (230 aa).

D24 serves as the catalytic Proton acceptor. Residue K133 is part of the active site. C166 acts as the Nucleophile in catalysis.

The protein belongs to the isochorismatase family. RutB subfamily.

The enzyme catalyses (Z)-3-ureidoacrylate + H2O + H(+) = (Z)-3-aminoacrylate + NH4(+) + CO2. The catalysed reaction is (Z)-3-ureidoacrylate + H2O = (Z)-3-aminoacrylate + carbamate + H(+). It carries out the reaction (Z)-2-methylureidoacrylate + H2O + H(+) = (Z)-2-methylaminoacrylate + NH4(+) + CO2. In terms of biological role, hydrolyzes ureidoacrylate to form aminoacrylate and carbamate. The carbamate hydrolyzes spontaneously, thereby releasing one of the nitrogen atoms of the pyrimidine ring as ammonia and one of its carbon atoms as CO2. This is Ureidoacrylate amidohydrolase RutB from Escherichia coli O111:H- (strain 11128 / EHEC).